We begin with the raw amino-acid sequence, 293 residues long: Diaminopimelate epimerase (293 aa).

Substrate-binding residues include asparagine 17, glutamine 47, and asparagine 67. The Proton donor role is filled by cysteine 76. Residues 77–78, asparagine 164, asparagine 197, and 215–216 contribute to the substrate site; these read GN and ER. Cysteine 224 acts as the Proton acceptor in catalysis. 225–226 lines the substrate pocket; it reads GS.

Belongs to the diaminopimelate epimerase family. Homodimer.

The protein resides in the cytoplasm. The enzyme catalyses (2S,6S)-2,6-diaminopimelate = meso-2,6-diaminopimelate. It functions in the pathway amino-acid biosynthesis; L-lysine biosynthesis via DAP pathway; DL-2,6-diaminopimelate from LL-2,6-diaminopimelate: step 1/1. Its function is as follows. Catalyzes the stereoinversion of LL-2,6-diaminopimelate (L,L-DAP) to meso-diaminopimelate (meso-DAP), a precursor of L-lysine and an essential component of the bacterial peptidoglycan. The sequence is that of Diaminopimelate epimerase from Rhodopseudomonas palustris (strain BisB5).